A 393-amino-acid chain; its full sequence is Lipid-A-disaccharide synthase (393 aa).

This sequence belongs to the LpxB family.

The enzyme catalyses a lipid X + a UDP-2-N,3-O-bis[(3R)-3-hydroxyacyl]-alpha-D-glucosamine = a lipid A disaccharide + UDP + H(+). Its pathway is bacterial outer membrane biogenesis; LPS lipid A biosynthesis. In terms of biological role, condensation of UDP-2,3-diacylglucosamine and 2,3-diacylglucosamine-1-phosphate to form lipid A disaccharide, a precursor of lipid A, a phosphorylated glycolipid that anchors the lipopolysaccharide to the outer membrane of the cell. The polypeptide is Lipid-A-disaccharide synthase (Bordetella bronchiseptica (strain ATCC BAA-588 / NCTC 13252 / RB50) (Alcaligenes bronchisepticus)).